Consider the following 95-residue polypeptide: Aspartyl/glutamyl-tRNA(Asn/Gln) amidotransferase subunit C (95 aa).

It belongs to the GatC family. Heterotrimer of A, B and C subunits.

It catalyses the reaction L-glutamyl-tRNA(Gln) + L-glutamine + ATP + H2O = L-glutaminyl-tRNA(Gln) + L-glutamate + ADP + phosphate + H(+). It carries out the reaction L-aspartyl-tRNA(Asn) + L-glutamine + ATP + H2O = L-asparaginyl-tRNA(Asn) + L-glutamate + ADP + phosphate + 2 H(+). Functionally, allows the formation of correctly charged Asn-tRNA(Asn) or Gln-tRNA(Gln) through the transamidation of misacylated Asp-tRNA(Asn) or Glu-tRNA(Gln) in organisms which lack either or both of asparaginyl-tRNA or glutaminyl-tRNA synthetases. The reaction takes place in the presence of glutamine and ATP through an activated phospho-Asp-tRNA(Asn) or phospho-Glu-tRNA(Gln). This chain is Aspartyl/glutamyl-tRNA(Asn/Gln) amidotransferase subunit C, found in Acidithiobacillus ferrooxidans (strain ATCC 23270 / DSM 14882 / CIP 104768 / NCIMB 8455) (Ferrobacillus ferrooxidans (strain ATCC 23270)).